Here is a 151-residue protein sequence, read N- to C-terminus: Glycosylation-dependent cell adhesion molecule 1 (151 aa).

The first 19 residues, 1–19 (MKFFTVLLFVSLAATSLAL), serve as a signal peptide directing secretion. A disordered region spans residues 29–123 (MKTQPTDAIP…ENLTKSSQTV (95 aa)). A compositionally biased stretch (low complexity) spans 42-52 (STPTSYTSEES). Residues 53–71 (TSSKDLSKEPSIFREELIS) show a composition bias toward basic and acidic residues. A phosphoserine mark is found at Ser54, Ser59, Ser63, and Ser71. A compositionally biased stretch (low complexity) spans 103 to 114 (RPTTSAATTSEE). Asn115 is a glycosylation site (N-linked (GlcNAc...) asparagine).

It belongs to the PP3/GlyCAM-1 family. Post-translationally, extensively O-glycosylated. In terms of tissue distribution, lymph nodes. Associated with the lumenal surface of the high endothelial venules of peripheral lymph nodes.

It localises to the cell membrane. Functionally, adhesion molecule that accomplishes cell binding by presenting carbohydrate(s) to the lectin domain of L-selectin. The sequence is that of Glycosylation-dependent cell adhesion molecule 1 (Glycam1) from Mus musculus (Mouse).